The sequence spans 526 residues: Light-independent protochlorophyllide reductase subunit B (526 aa).

Asp36 serves as a coordination point for [4Fe-4S] cluster. Residue Asp284 is the Proton donor of the active site. 419–420 (GL) serves as a coordination point for substrate.

This sequence belongs to the ChlB/BchB/BchZ family. In terms of assembly, protochlorophyllide reductase is composed of three subunits; BchL, BchN and BchB. Forms a heterotetramer of two BchB and two BchN subunits. [4Fe-4S] cluster serves as cofactor.

It carries out the reaction chlorophyllide a + oxidized 2[4Fe-4S]-[ferredoxin] + 2 ADP + 2 phosphate = protochlorophyllide a + reduced 2[4Fe-4S]-[ferredoxin] + 2 ATP + 2 H2O. Its pathway is porphyrin-containing compound metabolism; bacteriochlorophyll biosynthesis (light-independent). Its function is as follows. Component of the dark-operative protochlorophyllide reductase (DPOR) that uses Mg-ATP and reduced ferredoxin to reduce ring D of protochlorophyllide (Pchlide) to form chlorophyllide a (Chlide). This reaction is light-independent. The NB-protein (BchN-BchB) is the catalytic component of the complex. The protein is Light-independent protochlorophyllide reductase subunit B of Halorhodospira halophila (strain DSM 244 / SL1) (Ectothiorhodospira halophila (strain DSM 244 / SL1)).